We begin with the raw amino-acid sequence, 142 residues long: Nucleoside diphosphate kinase (142 aa).

ATP is bound by residues lysine 9, phenylalanine 57, arginine 85, threonine 91, arginine 102, and asparagine 112. Histidine 115 (pros-phosphohistidine intermediate) is an active-site residue.

It belongs to the NDK family. As to quaternary structure, homotetramer. Mg(2+) serves as cofactor.

It is found in the cytoplasm. It carries out the reaction a 2'-deoxyribonucleoside 5'-diphosphate + ATP = a 2'-deoxyribonucleoside 5'-triphosphate + ADP. It catalyses the reaction a ribonucleoside 5'-diphosphate + ATP = a ribonucleoside 5'-triphosphate + ADP. Its function is as follows. Major role in the synthesis of nucleoside triphosphates other than ATP. The ATP gamma phosphate is transferred to the NDP beta phosphate via a ping-pong mechanism, using a phosphorylated active-site intermediate. This is Nucleoside diphosphate kinase from Dehalococcoides mccartyi (strain CBDB1).